The chain runs to 602 residues: Glutaminase liver isoform, mitochondrial (602 aa).

Residues 1–14 (MRSMRALQNALSRA) constitute a mitochondrion transit peptide. Disordered stretches follow at residues 1–29 (MRSM…PSRG) and 45–66 (AQGR…ASHS). Substrate is bound at residue serine 219. Lysine 253 is modified (N6-succinyllysine). Asparagine 268 contacts substrate. 2 positions are modified to N6-acetyllysine: lysine 279 and lysine 284. Substrate is bound by residues glutamate 314 and asparagine 321. Lysine 329 carries the post-translational modification N6-acetyllysine. 3 residues coordinate substrate: tyrosine 347, tyrosine 399, and valine 417. 2 ANK repeats span residues 518 to 551 (DSRT…VKDR) and 552 to 585 (WGNI…SETQ).

The protein belongs to the glutaminase family. As to quaternary structure, homotetramer, dimer of dimers. Does not assemble into higher oligomers. Interacts with the PDZ domain of the syntrophin SNTA1. Interacts with the PDZ domain of TAX1BP3.

Its subcellular location is the mitochondrion. The enzyme catalyses L-glutamine + H2O = L-glutamate + NH4(+). Its activity is regulated as follows. Enzyme activity is not stimulated by phosphate. Phosphate increases kcat, but decreases substrate affinity, resulting in unchanged enzyme activity. Plays an important role in the regulation of glutamine catabolism. Promotes mitochondrial respiration and increases ATP generation in cells by catalyzing the synthesis of glutamate and alpha-ketoglutarate. Increases cellular anti-oxidant function via NADH and glutathione production. May play a role in preventing tumor proliferation. The polypeptide is Glutaminase liver isoform, mitochondrial (Gls2) (Mus musculus (Mouse)).